The chain runs to 455 residues: Bifunctional protein GlmU (455 aa).

The segment at Met1–Pro227 is pyrophosphorylase. Residues Leu8–Gly11, Lys22, Gln73, Gly78–Thr79, Tyr100–Asp102, Gly137, Glu152, Asn167, and Asn225 contribute to the UDP-N-acetyl-alpha-D-glucosamine site. Asp102 provides a ligand contact to Mg(2+). Residue Asn225 coordinates Mg(2+). Positions Val228–Gln248 are linker. Residues Gly249–Lys455 are N-acetyltransferase. UDP-N-acetyl-alpha-D-glucosamine contacts are provided by Arg331 and Lys349. Catalysis depends on His361, which acts as the Proton acceptor. The UDP-N-acetyl-alpha-D-glucosamine site is built by Tyr364 and Asn375. Acetyl-CoA-binding positions include Ala378, Asn384–Tyr385, Ser403, Ala421, and Arg438. Positions Gly420–Lys455 are disordered.

It in the N-terminal section; belongs to the N-acetylglucosamine-1-phosphate uridyltransferase family. In the C-terminal section; belongs to the transferase hexapeptide repeat family. Homotrimer. It depends on Mg(2+) as a cofactor.

The protein localises to the cytoplasm. The enzyme catalyses alpha-D-glucosamine 1-phosphate + acetyl-CoA = N-acetyl-alpha-D-glucosamine 1-phosphate + CoA + H(+). It catalyses the reaction N-acetyl-alpha-D-glucosamine 1-phosphate + UTP + H(+) = UDP-N-acetyl-alpha-D-glucosamine + diphosphate. Its pathway is nucleotide-sugar biosynthesis; UDP-N-acetyl-alpha-D-glucosamine biosynthesis; N-acetyl-alpha-D-glucosamine 1-phosphate from alpha-D-glucosamine 6-phosphate (route II): step 2/2. It functions in the pathway nucleotide-sugar biosynthesis; UDP-N-acetyl-alpha-D-glucosamine biosynthesis; UDP-N-acetyl-alpha-D-glucosamine from N-acetyl-alpha-D-glucosamine 1-phosphate: step 1/1. It participates in bacterial outer membrane biogenesis; LPS lipid A biosynthesis. Functionally, catalyzes the last two sequential reactions in the de novo biosynthetic pathway for UDP-N-acetylglucosamine (UDP-GlcNAc). The C-terminal domain catalyzes the transfer of acetyl group from acetyl coenzyme A to glucosamine-1-phosphate (GlcN-1-P) to produce N-acetylglucosamine-1-phosphate (GlcNAc-1-P), which is converted into UDP-GlcNAc by the transfer of uridine 5-monophosphate (from uridine 5-triphosphate), a reaction catalyzed by the N-terminal domain. The polypeptide is Bifunctional protein GlmU (Acidithiobacillus ferrooxidans (strain ATCC 23270 / DSM 14882 / CIP 104768 / NCIMB 8455) (Ferrobacillus ferrooxidans (strain ATCC 23270))).